Reading from the N-terminus, the 373-residue chain is Velvet complex subunit RYP3 (373 aa).

Positions M1–H10 are enriched in basic and acidic residues. Disordered stretches follow at residues M1 to G26 and R344 to G373. The Velvet domain occupies V48–R344. The segment covering G364–G373 has biased composition (acidic residues).

It belongs to the velvet family. VelB subfamily. In terms of assembly, component of the heterotrimeric velvet complex composed of LAE1, VEL1 and VEL2; VEL1A acting as a bridging protein between LAE1 and VEL2. Forms a heterodimeric complex with VOS1; the formation of the VEL2-VOS1 complex is light-dependent.

Its subcellular location is the nucleus. It localises to the cytoplasm. Its function is as follows. Component of the velvet transcription factor complex that controls sexual/asexual developmental ratio in response to light, promoting sexual development in the darkness while stimulating asexual sporulation under illumination. The velvet complex acts as a global regulator for secondary metabolite gene expression. Component of the RYP2-RYP3 heterodimeric complex that plays a dual role in activating genes associated with spore maturation and repressing certain development-associated genes. The complex binds DNA through the DNA-binding domain of RYP2 that recognizes an 11-nucleotide consensus sequence 5'-CTGGCCGCGGC-3' consisting of two motifs in the promoters of key developmental regulatory genes. Required for viable spore production and regulation of sporulation in response to temperature, as well as for the switch to yeast-form in the presence of host cells. This Ajellomyces capsulatus (Darling's disease fungus) protein is Velvet complex subunit RYP3 (RYP3).